The primary structure comprises 193 residues: Holliday junction branch migration complex subunit RuvA (193 aa).

Residues 1 to 64 (MIGRIAGILL…EDAHLLYGFL (64 aa)) are domain I. The segment at 65–139 (TPQERTTFRE…GKLGADLGAL (75 aa)) is domain II. Residues 139–143 (LAGAA) form a flexible linker region. Residues 144 to 193 (SPSDHAADILNALVALGYSEKEGLAAIKNVPAGTGVSDGIKLALKALSKA) are domain III.

This sequence belongs to the RuvA family. Homotetramer. Forms an RuvA(8)-RuvB(12)-Holliday junction (HJ) complex. HJ DNA is sandwiched between 2 RuvA tetramers; dsDNA enters through RuvA and exits via RuvB. An RuvB hexamer assembles on each DNA strand where it exits the tetramer. Each RuvB hexamer is contacted by two RuvA subunits (via domain III) on 2 adjacent RuvB subunits; this complex drives branch migration. In the full resolvosome a probable DNA-RuvA(4)-RuvB(12)-RuvC(2) complex forms which resolves the HJ.

The protein resides in the cytoplasm. In terms of biological role, the RuvA-RuvB-RuvC complex processes Holliday junction (HJ) DNA during genetic recombination and DNA repair, while the RuvA-RuvB complex plays an important role in the rescue of blocked DNA replication forks via replication fork reversal (RFR). RuvA specifically binds to HJ cruciform DNA, conferring on it an open structure. The RuvB hexamer acts as an ATP-dependent pump, pulling dsDNA into and through the RuvAB complex. HJ branch migration allows RuvC to scan DNA until it finds its consensus sequence, where it cleaves and resolves the cruciform DNA. The sequence is that of Holliday junction branch migration complex subunit RuvA from Burkholderia vietnamiensis (strain G4 / LMG 22486) (Burkholderia cepacia (strain R1808)).